The sequence spans 43 residues: Photosystem II reaction center protein Psb30 (43 aa).

The chain crosses the membrane as a helical span at residues 15-35 (VIFQLTFVSLILISGPVVIFL).

Belongs to the Psb30/Ycf12 family. In terms of assembly, PSII is composed of 1 copy each of membrane proteins PsbA, PsbB, PsbC, PsbD, PsbE, PsbF, PsbH, PsbI, PsbJ, PsbK, PsbL, PsbM, PsbT, PsbX, PsbY, PsbZ, Psb30/Ycf12, peripheral proteins PsbO, CyanoQ (PsbQ), PsbU, PsbV and a large number of cofactors. It forms dimeric complexes.

The protein resides in the cellular thylakoid membrane. A core subunit of photosystem II (PSII), probably helps stabilize the reaction center. This chain is Photosystem II reaction center protein Psb30, found in Picosynechococcus sp. (strain ATCC 27264 / PCC 7002 / PR-6) (Agmenellum quadruplicatum).